The chain runs to 185 residues: Coiled-coil domain-containing protein 32 (185 aa).

Residues L78 to K98 are a coiled coil. Residues I159–Q185 form a disordered region.

As to quaternary structure, interacts with AP2S1; the interaction is direct and mediates association with adaptor protein complex 2 (AP-2).

Its subcellular location is the membrane. The protein localises to the coated pit. Regulates clathrin-mediated endocytsois of cargos such as transferrin probably through the association and modulation of adaptor protein complex 2 (AP-2). Has a role in ciliogenesis. Required for proper cephalic and left/right axis development. The sequence is that of Coiled-coil domain-containing protein 32 from Homo sapiens (Human).